A 225-amino-acid chain; its full sequence is Leucyl/phenylalanyl-tRNA--protein transferase (225 aa).

Belongs to the L/F-transferase family.

Its subcellular location is the cytoplasm. The enzyme catalyses N-terminal L-lysyl-[protein] + L-leucyl-tRNA(Leu) = N-terminal L-leucyl-L-lysyl-[protein] + tRNA(Leu) + H(+). It catalyses the reaction N-terminal L-arginyl-[protein] + L-leucyl-tRNA(Leu) = N-terminal L-leucyl-L-arginyl-[protein] + tRNA(Leu) + H(+). It carries out the reaction L-phenylalanyl-tRNA(Phe) + an N-terminal L-alpha-aminoacyl-[protein] = an N-terminal L-phenylalanyl-L-alpha-aminoacyl-[protein] + tRNA(Phe). In terms of biological role, functions in the N-end rule pathway of protein degradation where it conjugates Leu, Phe and, less efficiently, Met from aminoacyl-tRNAs to the N-termini of proteins containing an N-terminal arginine or lysine. This chain is Leucyl/phenylalanyl-tRNA--protein transferase, found in Nitrobacter hamburgensis (strain DSM 10229 / NCIMB 13809 / X14).